The chain runs to 560 residues: Nucleoprotein (560 aa).

Positions 54 to 236 (LRKAKRSDAD…ITRDESAVNI (183 aa)) are binding site for the cap structure m7GTP. A compositionally biased stretch (polar residues) spans 323-332 (GRSWDNTSVD). The disordered stretch occupies residues 323 to 349 (GRSWDNTSVDLNPKPDPGPRAPEKNGQ). Mn(2+) contacts are provided by Asp380 and Glu382. Positions 390, 497, 500, and 521 each coordinate Zn(2+). Asp525 serves as a coordination point for Mn(2+).

Belongs to the arenaviridae nucleocapsid protein family. In terms of assembly, homomultimerizes to form the nucleocapsid. Binds to viral genomic RNA. Interacts with glycoprotein G2. Interacts with protein Z; this interaction probably directs the encapsidated genome to budding sites. Interacts with protein L; this interaction does not interfere with Z-L interaction. Interacts with host IKBKE (via Protein kinase domain); the interaction inhibits IKBKE kinase activity.

Its subcellular location is the virion. The protein localises to the host cytoplasm. Encapsidates the genome, protecting it from nucleases. The encapsidated genomic RNA is termed the nucleocapsid (NC). Serves as template for viral transcription and replication. The increased presence of protein N in host cell does not seem to trigger the switch from transcription to replication as observed in other negative strain RNA viruses. Through the interaction with host IKBKE, strongly inhibits the phosphorylation and nuclear translocation of host IRF3, a protein involved in interferon activation pathway, leading to the inhibition of interferon-beta and IRF3-dependent promoters activation. Also encodes a functional 3'-5' exoribonuclease that degrades preferentially dsRNA substrates and thereby participates in the suppression of interferon induction. The sequence is that of Nucleoprotein from Cupixi mammarenavirus (isolate Rat/Brasil/BeAn 119303/1970) (CPXV).